The chain runs to 334 residues: DNA-directed RNA polymerase subunit alpha (334 aa).

An alpha N-terminal domain (alpha-NTD) region spans residues 1-234 (MQRSVHELLT…QQLAVFVDFD (234 aa)). Positions 248-334 (IDPILLRPVD…LRGDDRVLGG (87 aa)) are alpha C-terminal domain (alpha-CTD).

Belongs to the RNA polymerase alpha chain family. In terms of assembly, homodimer. The RNAP catalytic core consists of 2 alpha, 1 beta, 1 beta' and 1 omega subunit. When a sigma factor is associated with the core the holoenzyme is formed, which can initiate transcription.

The enzyme catalyses RNA(n) + a ribonucleoside 5'-triphosphate = RNA(n+1) + diphosphate. DNA-dependent RNA polymerase catalyzes the transcription of DNA into RNA using the four ribonucleoside triphosphates as substrates. The protein is DNA-directed RNA polymerase subunit alpha of Marinobacter nauticus (strain ATCC 700491 / DSM 11845 / VT8) (Marinobacter aquaeolei).